The chain runs to 364 residues: Probable dual-specificity RNA methyltransferase RlmN (364 aa).

Glu-107 (proton acceptor) is an active-site residue. The Radical SAM core domain occupies 113-346; the sequence is HEYGNSVCVT…ATIRREQGSD (234 aa). A disulfide bridge links Cys-120 with Cys-351. [4Fe-4S] cluster contacts are provided by Cys-127, Cys-131, and Cys-134. S-adenosyl-L-methionine-binding positions include 177–178, Ser-209, 232–234, and Asn-308; these read GE and SLH. The S-methylcysteine intermediate role is filled by Cys-351.

The protein belongs to the radical SAM superfamily. RlmN family. [4Fe-4S] cluster serves as cofactor.

Its subcellular location is the cytoplasm. The enzyme catalyses adenosine(2503) in 23S rRNA + 2 reduced [2Fe-2S]-[ferredoxin] + 2 S-adenosyl-L-methionine = 2-methyladenosine(2503) in 23S rRNA + 5'-deoxyadenosine + L-methionine + 2 oxidized [2Fe-2S]-[ferredoxin] + S-adenosyl-L-homocysteine. It carries out the reaction adenosine(37) in tRNA + 2 reduced [2Fe-2S]-[ferredoxin] + 2 S-adenosyl-L-methionine = 2-methyladenosine(37) in tRNA + 5'-deoxyadenosine + L-methionine + 2 oxidized [2Fe-2S]-[ferredoxin] + S-adenosyl-L-homocysteine. Specifically methylates position 2 of adenine 2503 in 23S rRNA and position 2 of adenine 37 in tRNAs. Confers resistance to some classes of antibiotics. The sequence is that of Probable dual-specificity RNA methyltransferase RlmN from Staphylococcus epidermidis (strain ATCC 35984 / DSM 28319 / BCRC 17069 / CCUG 31568 / BM 3577 / RP62A).